Reading from the N-terminus, the 375-residue chain is Histidine biosynthesis bifunctional protein HisB (375 aa).

Positions 1–168 are histidinol-phosphatase; sequence MTPIVFIDRD…GIAHTLADAP (168 aa). D8 functions as the Nucleophile in the catalytic mechanism. The Mg(2+) site is built by D8, D10, and D128. D10 (proton donor) is an active-site residue. Residues 169 to 375 form an imidazoleglycerol-phosphate dehydratase region; the sequence is RRAVVQRHTK…HVLPSTKGAL (207 aa).

This sequence in the N-terminal section; belongs to the histidinol-phosphatase family. In the C-terminal section; belongs to the imidazoleglycerol-phosphate dehydratase family. Requires Mg(2+) as cofactor.

It localises to the cytoplasm. It carries out the reaction D-erythro-1-(imidazol-4-yl)glycerol 3-phosphate = 3-(imidazol-4-yl)-2-oxopropyl phosphate + H2O. The enzyme catalyses L-histidinol phosphate + H2O = L-histidinol + phosphate. It functions in the pathway amino-acid biosynthesis; L-histidine biosynthesis; L-histidine from 5-phospho-alpha-D-ribose 1-diphosphate: step 6/9. It participates in amino-acid biosynthesis; L-histidine biosynthesis; L-histidine from 5-phospho-alpha-D-ribose 1-diphosphate: step 8/9. This Xylella fastidiosa (strain Temecula1 / ATCC 700964) protein is Histidine biosynthesis bifunctional protein HisB.